The chain runs to 160 residues: SsrA-binding protein (160 aa).

Residues 131-160 form a disordered region; it reads KKEYDKRHTERERDSDRELQRAVRSKGKDD.

This sequence belongs to the SmpB family.

It localises to the cytoplasm. In terms of biological role, required for rescue of stalled ribosomes mediated by trans-translation. Binds to transfer-messenger RNA (tmRNA), required for stable association of tmRNA with ribosomes. tmRNA and SmpB together mimic tRNA shape, replacing the anticodon stem-loop with SmpB. tmRNA is encoded by the ssrA gene; the 2 termini fold to resemble tRNA(Ala) and it encodes a 'tag peptide', a short internal open reading frame. During trans-translation Ala-aminoacylated tmRNA acts like a tRNA, entering the A-site of stalled ribosomes, displacing the stalled mRNA. The ribosome then switches to translate the ORF on the tmRNA; the nascent peptide is terminated with the 'tag peptide' encoded by the tmRNA and targeted for degradation. The ribosome is freed to recommence translation, which seems to be the essential function of trans-translation. The protein is SsrA-binding protein of Pseudomonas syringae pv. syringae (strain B728a).